The primary structure comprises 280 residues: Phosphatidylglycerol--prolipoprotein diacylglyceryl transferase (280 aa).

3 helical membrane passes run 15–35, 60–80, and 90–110; these read IFSIPIRWYGLMYFLAFIFAL, FIGLFIGGRIGYIIFYNPVFF, and IWEGGMSFHGGLLGVIIVLLF. A 1,2-diacyl-sn-glycero-3-phospho-(1'-sn-glycerol) is bound at residue R138. 2 helical membrane-spanning segments follow: residues 217-237 and 257-277; these read MPFGFVSSIFLILYGCFRIFL and GQLLSMPMIVLGILIAINIYV.

Belongs to the Lgt family.

It localises to the cell membrane. The enzyme catalyses L-cysteinyl-[prolipoprotein] + a 1,2-diacyl-sn-glycero-3-phospho-(1'-sn-glycerol) = an S-1,2-diacyl-sn-glyceryl-L-cysteinyl-[prolipoprotein] + sn-glycerol 1-phosphate + H(+). Its pathway is protein modification; lipoprotein biosynthesis (diacylglyceryl transfer). Its function is as follows. Catalyzes the transfer of the diacylglyceryl group from phosphatidylglycerol to the sulfhydryl group of the N-terminal cysteine of a prolipoprotein, the first step in the formation of mature lipoproteins. This Buchnera aphidicola subsp. Baizongia pistaciae (strain Bp) protein is Phosphatidylglycerol--prolipoprotein diacylglyceryl transferase.